A 529-amino-acid polypeptide reads, in one-letter code: Lanosterol 14-alpha demethylase (529 aa).

Residue Cys-468 participates in heme binding.

Belongs to the cytochrome P450 family. Heme serves as cofactor.

The protein localises to the membrane. The enzyme catalyses a 14alpha-methyl steroid + 3 reduced [NADPH--hemoprotein reductase] + 3 O2 = a Delta(14) steroid + formate + 3 oxidized [NADPH--hemoprotein reductase] + 4 H2O + 4 H(+). The catalysed reaction is a 14alpha-methyl steroid + reduced [NADPH--hemoprotein reductase] + O2 = a 14alpha-hydroxymethyl steroid + oxidized [NADPH--hemoprotein reductase] + H2O + H(+). It catalyses the reaction a 14alpha-hydroxymethyl steroid + reduced [NADPH--hemoprotein reductase] + O2 = a 14alpha-formyl steroid + oxidized [NADPH--hemoprotein reductase] + 2 H2O + H(+). It carries out the reaction a 14alpha-formyl steroid + reduced [NADPH--hemoprotein reductase] + O2 = a Delta(14) steroid + formate + oxidized [NADPH--hemoprotein reductase] + H2O + 2 H(+). The enzyme catalyses lanosterol + 3 reduced [NADPH--hemoprotein reductase] + 3 O2 = 4,4-dimethyl-5alpha-cholesta-8,14,24-trien-3beta-ol + formate + 3 oxidized [NADPH--hemoprotein reductase] + 4 H2O + 4 H(+). The catalysed reaction is lanosterol + reduced [NADPH--hemoprotein reductase] + O2 = 32-hydroxylanosterol + oxidized [NADPH--hemoprotein reductase] + H2O + H(+). It catalyses the reaction 32-hydroxylanosterol + reduced [NADPH--hemoprotein reductase] + O2 = 32-oxolanosterol + oxidized [NADPH--hemoprotein reductase] + 2 H2O + H(+). It carries out the reaction 32-oxolanosterol + reduced [NADPH--hemoprotein reductase] + O2 = 4,4-dimethyl-5alpha-cholesta-8,14,24-trien-3beta-ol + formate + oxidized [NADPH--hemoprotein reductase] + H2O + 2 H(+). The enzyme catalyses eburicol + 3 reduced [NADPH--hemoprotein reductase] + 3 O2 = 14-demethyleburicol + formate + 3 oxidized [NADPH--hemoprotein reductase] + 4 H2O + 4 H(+). The catalysed reaction is eburicol + reduced [NADPH--hemoprotein reductase] + O2 = 32-hydroxyeburicol + oxidized [NADPH--hemoprotein reductase] + H2O + H(+). It catalyses the reaction 32-hydroxyeburicol + reduced [NADPH--hemoprotein reductase] + O2 = 32-oxoeburicol + oxidized [NADPH--hemoprotein reductase] + 2 H2O + H(+). It carries out the reaction 32-oxoeburicol + reduced [NADPH--hemoprotein reductase] + O2 = 14-demethyleburicol + formate + oxidized [NADPH--hemoprotein reductase] + H2O + 2 H(+). The protein operates within steroid biosynthesis; zymosterol biosynthesis; zymosterol from lanosterol: step 1/6. Functionally, sterol 14alpha-demethylase that plays a critical role in the third module of ergosterol biosynthesis pathway, being ergosterol the major sterol component in fungal membranes that participates in a variety of functions. The third module or late pathway involves the ergosterol synthesis itself through consecutive reactions that mainly occur in the endoplasmic reticulum (ER) membrane. In filamentous fungi, during the initial step of this module, lanosterol (lanosta-8,24-dien-3beta-ol) can be metabolized to eburicol. Sterol 14alpha-demethylase catalyzes the three-step oxidative removal of the 14alpha-methyl group (C-32) of both these sterols in the form of formate, and converts eburicol and lanosterol to 14-demethyleburicol (4,4,24-trimethylergosta-8,14,24(28)-trienol) and 4,4-dimethyl-5alpha-cholesta-8,14,24-trien-3beta-ol, respectively, which are further metabolized by other enzymes in the pathway to ergosterol. Can also use substrates not intrinsic to fungi, such as 24,25-dihydrolanosterol (DHL), producing 4,4-dimethyl-8,14-cholestadien-3-beta-ol, but at lower rates than the endogenous substrates. This Eremothecium gossypii (strain ATCC 10895 / CBS 109.51 / FGSC 9923 / NRRL Y-1056) (Yeast) protein is Lanosterol 14-alpha demethylase (ERG11).